Consider the following 262-residue polypeptide: Mediator of RNA polymerase II transcription subunit 8 (262 aa).

Residues 168 to 211 (LEEKEMGVKNVITGLKRQLDEGDEEDEEEEEEEEDMQGEEMEVV) adopt a coiled-coil conformation. The tract at residues 183-206 (KRQLDEGDEEDEEEEEEEEDMQGE) is disordered. Over residues 188–206 (EGDEEDEEEEEEEEDMQGE) the composition is skewed to acidic residues.

This sequence belongs to the Mediator complex subunit 8 family. As to quaternary structure, component of the Mediator complex.

It is found in the nucleus. In terms of biological role, component of the Mediator complex, a coactivator involved in the regulated transcription of nearly all RNA polymerase II-dependent genes. Mediator functions as a bridge to convey information from gene-specific regulatory proteins to the basal RNA polymerase II transcription machinery. Mediator is recruited to promoters by direct interactions with regulatory proteins and serves as a scaffold for the assembly of a functional preinitiation complex with RNA polymerase II and the general transcription factors. This chain is Mediator of RNA polymerase II transcription subunit 8 (MED8), found in Coccidioides immitis (strain RS) (Valley fever fungus).